The sequence spans 365 residues: 3-dehydroquinate synthase (365 aa).

Residues 106–110 (GVIGD), 130–131 (TT), K142, K151, and 169–172 (FFAT) each bind NAD(+). Zn(2+)-binding residues include E184, H247, and H264.

Belongs to the sugar phosphate cyclases superfamily. Dehydroquinate synthase family. Requires NAD(+) as cofactor. Co(2+) serves as cofactor. Zn(2+) is required as a cofactor.

It localises to the cytoplasm. It carries out the reaction 7-phospho-2-dehydro-3-deoxy-D-arabino-heptonate = 3-dehydroquinate + phosphate. The protein operates within metabolic intermediate biosynthesis; chorismate biosynthesis; chorismate from D-erythrose 4-phosphate and phosphoenolpyruvate: step 2/7. Catalyzes the conversion of 3-deoxy-D-arabino-heptulosonate 7-phosphate (DAHP) to dehydroquinate (DHQ). The polypeptide is 3-dehydroquinate synthase (Listeria innocua serovar 6a (strain ATCC BAA-680 / CLIP 11262)).